A 358-amino-acid chain; its full sequence is Trace amine-associated receptor 7h (358 aa).

Residues 1–47 (MATDDESFPWDQDSILSRDLLSALSPQLCYENLNRSCVRSPYSPGPR) lie on the Extracellular side of the membrane. N-linked (GlcNAc...) asparagine glycosylation occurs at Asn-34. Cystine bridges form between Cys-37-Cys-201 and Cys-120-Cys-205. A helical membrane pass occupies residues 48-68 (LILYAVFGFGAVLAVCGNLLV). Over 69–83 (MTSILHFRQLHSPAN) the chain is Cytoplasmic. The helical transmembrane segment at 84–104 (FLVASLACADLLVGLTVMPFS) threads the bilayer. Topologically, residues 105–125 (MVRSVEGCWYFGDSYCKLHTS) are extracellular. Residues 126–143 (FDMSFCCSSLLHLCFISV) form a helical membrane-spanning segment. Residues 144–166 (DRYIAVSDPLIYPIRFTASVSGK) are Cytoplasmic-facing. Residues 167–187 (CITFSWFLSIIYGFSLIYTGA) traverse the membrane as a helical segment. Residues 188 to 217 (SEAGLKDLVSALSCVGGCQIPMNQSCVLIN) lie on the Extracellular side of the membrane. Asn-210 carries an N-linked (GlcNAc...) asparagine glycan. The chain crosses the membrane as a helical span at residues 218–238 (FLLFLVPTLVMMTVYSKIFLI). Residues 239-274 (AKQQAQNMEKMSKQTTRASDSYKDRVAKRERKAAKT) lie on the Cytoplasmic side of the membrane. A helical membrane pass occupies residues 275 to 295 (LGIAVAAFLLSWLPYLIDSII). Residues 296 to 309 (DAFLGFITPSYVYE) are Extracellular-facing. Residues 310–333 (ILVWIVYYNSAMNPLIYAFFYPWF) traverse the membrane as a helical segment. Topologically, residues 334-358 (RNAIKLIVTGKILKQNSSTTNLFSE) are cytoplasmic.

This sequence belongs to the G-protein coupled receptor 1 family.

It localises to the cell membrane. Functionally, olfactory receptor specific for N,N-dimethylalkylamines trace amines. Trace amine compounds are enriched in animal body fluids and act on trace amine-associated receptors (TAARs) to elicit both intraspecific and interspecific innate behaviors. Ligand-binding causes a conformation change that triggers signaling via G(s)-class of G alpha proteins (GNAL or GNAS). This chain is Trace amine-associated receptor 7h, found in Rattus norvegicus (Rat).